The primary structure comprises 233 residues: Purine nucleoside phosphorylase DeoD-type (233 aa).

His4 is a binding site for a purine D-ribonucleoside. Residues Gly20, Arg24, Arg43, and Arg87–Thr90 contribute to the phosphate site. Residues Glu179 to Glu181 and Ser203 to Asp204 each bind a purine D-ribonucleoside. Asp204 (proton donor) is an active-site residue.

This sequence belongs to the PNP/UDP phosphorylase family. Homohexamer; trimer of homodimers.

The enzyme catalyses a purine D-ribonucleoside + phosphate = a purine nucleobase + alpha-D-ribose 1-phosphate. It carries out the reaction a purine 2'-deoxy-D-ribonucleoside + phosphate = a purine nucleobase + 2-deoxy-alpha-D-ribose 1-phosphate. In terms of biological role, catalyzes the reversible phosphorolytic breakdown of the N-glycosidic bond in the beta-(deoxy)ribonucleoside molecules, with the formation of the corresponding free purine bases and pentose-1-phosphate. The polypeptide is Purine nucleoside phosphorylase DeoD-type (Helicobacter pylori (strain G27)).